Consider the following 146-residue polypeptide: DNA utilization protein HofO (146 aa).

A helical transmembrane segment spans residues 20–37 (WAFWLLMLVTLIFLSSTH).

It localises to the cell inner membrane. In terms of biological role, required for the use of extracellular DNA as a nutrient. The polypeptide is DNA utilization protein HofO (hofO) (Escherichia coli (strain K12)).